Consider the following 260-residue polypeptide: Dolichol-phosphate mannosyltransferase subunit 1 (260 aa).

The disordered stretch occupies residues 1–20; that stretch reads MAAEEASRSSPRFRREPKGR. Ala2 is modified (N-acetylalanine). A Phosphoserine modification is found at Ser9. GDP-alpha-D-mannose is bound by residues Pro32, Tyr34, Glu36, Ile63, Asp65, Asp118, Ala119, Asp120, Arg147, Arg234, and Lys240. Asp120 is a Mg(2+) binding site. Asp120 contacts Mn(2+).

This sequence belongs to the glycosyltransferase 2 family. In terms of assembly, component of the dolichol-phosphate mannose (DPM) synthase complex composed of DPM1, DPM2 and DPM3; within the complex, directly interacts with DPM3. This interaction may stabilize DPM1. Mg(2+) serves as cofactor. The cofactor is Mn(2+). It depends on Ca(2+) as a cofactor.

It is found in the endoplasmic reticulum. It catalyses the reaction a di-trans,poly-cis-dolichyl phosphate + GDP-alpha-D-mannose = a di-trans,poly-cis-dolichyl beta-D-mannosyl phosphate + GDP. The protein operates within protein modification; protein glycosylation. Transfers mannose from GDP-mannose to dolichol monophosphate to form dolichol phosphate mannose (Dol-P-Man) which is the mannosyl donor in pathways leading to N-glycosylation, glycosyl phosphatidylinositol membrane anchoring, and O-mannosylation of proteins; catalytic subunit of the dolichol-phosphate mannose (DPM) synthase complex. The polypeptide is Dolichol-phosphate mannosyltransferase subunit 1 (DPM1) (Bos taurus (Bovine)).